The following is a 468-amino-acid chain: Soluble pyridine nucleotide transhydrogenase (468 aa).

Glu-38–Cys-47 serves as a coordination point for FAD.

Belongs to the class-I pyridine nucleotide-disulfide oxidoreductase family. It depends on FAD as a cofactor.

The protein resides in the cytoplasm. The enzyme catalyses NAD(+) + NADPH = NADH + NADP(+). Functionally, conversion of NADPH, generated by peripheral catabolic pathways, to NADH, which can enter the respiratory chain for energy generation. This Pectobacterium atrosepticum (strain SCRI 1043 / ATCC BAA-672) (Erwinia carotovora subsp. atroseptica) protein is Soluble pyridine nucleotide transhydrogenase.